The primary structure comprises 398 residues: Argininosuccinate synthase (398 aa).

9–17 (AYSGGLDTS) serves as a coordination point for ATP. Tyr-85 contacts L-citrulline. Gly-115 contacts ATP. L-aspartate is bound by residues Thr-117, Asn-121, and Asp-122. Residue Asn-121 coordinates L-citrulline. Residues Arg-125, Ser-173, Glu-258, and Tyr-270 each contribute to the L-citrulline site.

The protein belongs to the argininosuccinate synthase family. Type 1 subfamily. Homotetramer.

It is found in the cytoplasm. The catalysed reaction is L-citrulline + L-aspartate + ATP = 2-(N(omega)-L-arginino)succinate + AMP + diphosphate + H(+). The protein operates within amino-acid biosynthesis; L-arginine biosynthesis; L-arginine from L-ornithine and carbamoyl phosphate: step 2/3. The sequence is that of Argininosuccinate synthase from Streptococcus pneumoniae (strain ATCC BAA-255 / R6).